The sequence spans 581 residues: Protein phosphatase 2C 70 (581 aa).

At Met-1–Asn-7 the chain is on the extracellular side. A helical membrane pass occupies residues Ile-8–Cys-28. Over Lys-29–Leu-581 the chain is Cytoplasmic. Residues Val-208 to Ile-259 form the FHA domain. The PPM-type phosphatase domain maps to Lys-304–Phe-577. Mn(2+) contacts are provided by Asp-346, Gly-347, Asp-521, and Asp-568.

As to quaternary structure, association of RLK5 with kapp domain is dependent on phosphorylation of RLK5 and can be abolished by dephosphorylation. Interacts with SERK1 and CDC48A. Component of the SERK1 signaling complex, composed of KAPP, CDC48A, GRF6 or GRF7, SERK1, SERK2, SERK3/BAK1 and BRI1. Interacts with CLV1. Requires Mg(2+) as cofactor. It depends on Mn(2+) as a cofactor. Expressed in all tissues examined.

The protein resides in the cell membrane. It catalyses the reaction O-phospho-L-seryl-[protein] + H2O = L-seryl-[protein] + phosphate. The enzyme catalyses O-phospho-L-threonyl-[protein] + H2O = L-threonyl-[protein] + phosphate. Dephosphorylates the Ser/Thr receptor-like kinase RLK5. May function as a signaling component in a pathway involving RLK5. Binds and dephosphorylates CLAVATA1 (CLV1). Functions as a negative regulator of the CLV1 signaling in plant development. Dephosphorylates SERK1 receptor kinase on threonine residues in the A-loop. Dephosphorylation of SERK1 controls SERK1 internalization. Component of a signaling pathway which mediates adaptation to NaCl stress. Is not a component of the SALT OVERLY SENSITIVE (SOS) pathway. The polypeptide is Protein phosphatase 2C 70 (Arabidopsis thaliana (Mouse-ear cress)).